The chain runs to 770 residues: MSRKGPRAEVCADCSAPDPGWASISRGVLVCDECCSVHRSLGRHISIVKHLRHSAWPPTLLQMVHTLASNGANSIWEHSLLDPAQVQSGRRKANPQDKVHPIKSEFIRAKYQMLAFVHKLPCRDDDGVTAKDLSKQLHSSVRTGNLETCLRLLSLGAQANFFHPEKGTTPLHVAAKAGQTLQAELLVVYGADPGSPDVNGRTPIDYARQAGHHELAERLVECQYELTDRLAFYLCGRKPDHKNGHYIIPQMADRSRQKCMSQSLDLSELAKAAKKKLQALSNRLFEELAMDVYDEVDRRENDAVWLATQNHSTLVTERSAVPFLPVNPEYSATRNQGRQKLARFNAREFATLIIDILSEAKRRQQGKSLSSPTDNLELSARNQSDLDDQHDYDSVASDEDTDQEPLPSAGATRNNRARSMDSSDLSDGAVTLQEYLELKKALATSEAKVQQLMKVNSSLSDELRKLQREIHKLQAENLQLRQPPGPVPVPSLPSERAEHTLMGPGGSTHRRDRQAFSMYEPGSALKPFGGAPGDELATRLQPFHSTELEDDAIYSVHVPAGLYRIRKGVSASSVTFTPSSPLLSSSQEGSRHASKLSRHGSGAESDYENTQSGEPLLGLEGKRFLELSKEDELHAELESLDGDPDPGLPSTEDVILKTEQVTKNIQELLRAAQEFKHDSFVPCSEKIHLAVTEMASLFPKRPALEPVRSSLRLLNASAYRLQSECRKTVPPEPGAPVDFQLLTQQVIQCAYDIAKAAKQLVTITTREKKQ.

The Arf-GAP domain maps to 1–124 (MSRKGPRAEV…AFVHKLPCRD (124 aa)). Residues 1–124 (MSRKGPRAEV…AFVHKLPCRD (124 aa)) form an interaction with gamma-tubulin and localization to the centrosome region. Residues 11–34 (CADCSAPDPGWASISRGVLVCDEC) form a C4-type zinc finger. ANK repeat units lie at residues 132-161 (DLSKQLHSSVRTGNLETCLRLLSLGAQANF), 166-195 (KGTTPLHVAAKAGQTLQAELLVVYGADPGS), and 199-228 (NGRTPIDYARQAGHHELAERLVECQYELTD). Tyr-224 carries the phosphotyrosine modification. The segment at 245–374 (HYIIPQMADR…QGKSLSSPTD (130 aa)) is interaction with PCLO. The interval 253 to 424 (DRSRQKCMSQ…NRARSMDSSD (172 aa)) is interaction with PTK2/FAK1. The tract at residues 254–376 (RSRQKCMSQS…KSLSSPTDNL (123 aa)) is interaction with ARHGEF7. The disordered stretch occupies residues 363 to 425 (RQQGKSLSSP…RARSMDSSDL (63 aa)). Positions 366–383 (GKSLSSPTDNLELSARNQ) are enriched in polar residues. 2 positions are modified to phosphoserine: Ser-368 and Ser-371. Position 373 is a phosphothreonine (Thr-373). Residues 375 to 596 (NLELSARNQS…QEGSRHASKL (222 aa)) are interaction with NCK2 and GRIN3A. The interval 375 to 596 (NLELSARNQS…QEGSRHASKL (222 aa)) is required for localization at synapses. Phosphoserine occurs at positions 379 and 384. Position 392 is a phosphotyrosine (Tyr-392). Ser-394 and Ser-397 each carry phosphoserine. Residues 394–403 (SVASDEDTDQ) are compositionally biased toward acidic residues. Phosphothreonine is present on Thr-401. A phosphoserine mark is found at Ser-419, Ser-422, and Ser-426. An interaction with MAPK1 region spans residues 420-475 (MDSSDLSDGAVTLQEYLELKKALATSEAKVQQLMKVNSSLSDELRKLQREIHKLQA). Residues 429–629 (AVTLQEYLEL…EGKRFLELSK (201 aa)) are interaction with IKBKG. Residues 449 to 483 (VQQLMKVNSSLSDELRKLQREIHKLQAENLQLRQP) are a coiled coil. 2 positions are modified to phosphoserine: Ser-507 and Ser-545. Thr-546 bears the Phosphothreonine mark. Phosphotyrosine occurs at positions 554 and 563. 4 positions are modified to phosphoserine: Ser-570, Ser-580, Ser-601, and Ser-605. Over residues 574–586 (VTFTPSSPLLSSS) the composition is skewed to low complexity. The segment at 574–615 (VTFTPSSPLLSSSQEGSRHASKLSRHGSGAESDYENTQSGEP) is disordered. The residue at position 610 (Thr-610) is a Phosphothreonine. Ser-639 carries the phosphoserine modification. The interval 646-770 (PGLPSTEDVI…VTITTREKKQ (125 aa)) is interaction with PXN and TGFB1I1.

As to quaternary structure, forms homodimers and possibly oligomers. May form heterooligomers with GIT2. Interacts with G protein-coupled receptor kinases, including GRK2, GRK3, GRK5 and GRK6. Interacts with PPFIA1, PPFIA2 and PPFIA4. Interacts with GRIP1 and forms a ternary complex with PPFIA1 and GRIP1. Directly interacts with ARHGEF7/beta-PIX, forming in vitro a heptameric complex made of a GIT1 dimer and an ARHGEF7 trimer. Directly interacts with PXN/paxillin; this interaction is enhanced in the presence of ARHGEF7. Directly interacts (via C-terminus) with TGFB1I1/Hic-5 (via LD motif 3). Directly interacts with PTK2/FAK1. May interact with PTK2B/PYK2; this interaction may be indirect. Interacts with AMPA receptors GRIA2/3. Directly interacts with protein Piccolo/PCLO. Forms a complex with Ephrin-B1/EFNB1 and NCK2/GRB4 (via SH2); this interaction is important for spine morphogenesis and synapse formation. Interaction with NCK2 is transient and depends upon GIT1 phosphorylation at Tyr-392. Interacts with GRIN3A/GluN3A (via C-terminus); this interaction competes with GIT1 interaction with ARHGEF7 and limits synaptic localization of GIT1. Interacts with IKBKG/NEMO in resting bone mesenchymal stem cells, as well as in TNF-stimulated cells; this interaction may increase IKBKG affinity for 'Lys-63'-linked polyubiquitin chains. Interacts with GABA(A) receptors, including GABRB3 and GABRG2. Interacts with SCRIB. Interacts (via N- and C-terminus) with ENTR1/SDCCAG3 (via N-terminus); this interaction is direct. May form a tripartite complex with ENTR1 and PTPN13. Interacts with YWHAZ. Interacts with PAK1 and PAK3. Directly interacts (via N-terminus) with gamma-tubulin. Interacts with MAPK1 and MAPK3; this interaction is required for MAPK1/3 recruitment to focal adhesions. Phosphorylated on tyrosine residues by PTK2/FAK1 and SRC in growing fibroblasts. Phosphorylation at Tyr-392 is induced by activation of Ephrin-B1/EFNB1 and catalyzed by SRC family kinases. It is required for the interaction with NCK2 and for GIT1 recruitment to synapses in hippocampal neurons. As to expression, widely expressed. Expressed at high levels in testis (at protein level). Expressed in the brain, including in CA1 hippocampal neurons, in the amygdala, and thalamic nuclei (at protein level).

The protein resides in the cytoplasm. Its subcellular location is the synapse. The protein localises to the presynapse. It is found in the postsynapse. It localises to the postsynaptic density. The protein resides in the cell junction. Its subcellular location is the focal adhesion. The protein localises to the cell projection. It is found in the lamellipodium. It localises to the cytoskeleton. The protein resides in the microtubule organizing center. Its subcellular location is the centrosome. The protein localises to the spindle pole. Its function is as follows. GTPase-activating protein for ADP ribosylation factor family members, including ARF1. Multidomain scaffold protein that interacts with numerous proteins and therefore participates in many cellular functions, including receptor internalization, focal adhesion remodeling, and signaling by both G protein-coupled receptors and tyrosine kinase receptors. Through PAK1 activation, positively regulates microtubule nucleation during interphase. Plays a role in the regulation of cytokinesis; for this function, may act in a pathway also involving ENTR1 and PTPN13. May promote cell motility both by regulating focal complex dynamics and by the activation of RAC1. May act as scaffold for MAPK1/3 signal transduction, recruiting MAPK1/3 to focal adhesions after EGF stimulation via a Src-dependent pathway, hence stimulating cell migration. Plays a role in brain development and function. Involved in the regulation of spine density and synaptic plasticity that is required for processes involved in learning. Plays an important role in dendritic spine morphogenesis and synapse formation. In hippocampal neurons, recruits guanine nucleotide exchange factors (GEFs), such as ARHGEF7/beta-PIX, to the synaptic membrane. These in turn locally activate RAC1, which is an essential step for spine morphogenesis and synapse formation. May contribute to the organization of presynaptic active zones through oligomerization and formation of a Piccolo/PCLO-based protein network, which includes ARHGEF7/beta-PIX and FAK1. In neurons, through its interaction with liprin-alpha family members, may be required for AMPA receptor (GRIA2/3) proper targeting to the cell membrane. In complex with GABA(A) receptors and ARHGEF7, plays a crucial role in regulating GABA(A) receptor synaptic stability, maintaining GPHN/gephyrin scaffolds and hence GABAergic inhibitory synaptic transmission, by locally coordinating RAC1 and PAK1 downstream effector activity, leading to F-actin stabilization. May also be important for RAC1 downstream signaling pathway through PAK3 and regulation of neuronal inhibitory transmission at presynaptic input. Required for successful bone regeneration during fracture healing. The function in intramembranous ossification may, at least partly, exerted by macrophages in which GIT1 is a key negative regulator of redox homeostasis, IL1B production, and glycolysis, acting through the ERK1/2/NRF2/NFE2L2 axis. May also play a role in angiogenesis during fracture healing. In this process, may regulate activation of the canonical NF-kappa-B signal in bone mesenchymal stem cells by enhancing the interaction between NEMO and 'Lys-63'-ubiquitinated RIPK1/RIP1, eventually leading to enhanced production of VEGFA and others angiogenic factors. Essential for VEGF signaling through the activation of phospholipase C-gamma and ERK1/2, hence may control endothelial cell proliferation and angiogenesis. This Rattus norvegicus (Rat) protein is ARF GTPase-activating protein GIT1.